The sequence spans 61 residues: Large ribosomal subunit protein bL28 (61 aa).

Belongs to the bacterial ribosomal protein bL28 family.

The polypeptide is Large ribosomal subunit protein bL28 (Lacticaseibacillus paracasei (strain ATCC 334 / BCRC 17002 / CCUG 31169 / CIP 107868 / KCTC 3260 / NRRL B-441) (Lactobacillus paracasei)).